A 100-amino-acid chain; its full sequence is Small ribosomal subunit protein bS21 (100 aa).

Residues 61-100 (KLQREGLLPMKPKPVFGAGPGGDRGRGPAAGAGAGPRGPR) are disordered. Over residues 78–100 (AGPGGDRGRGPAAGAGAGPRGPR) the composition is skewed to gly residues.

This sequence belongs to the bacterial ribosomal protein bS21 family.

This chain is Small ribosomal subunit protein bS21, found in Rhodopseudomonas palustris (strain BisB18).